The primary structure comprises 603 residues: Autophagy-related protein 13a (603 aa).

Position 248 is a phosphoserine (Ser248). Disordered regions lie at residues 258-477 (PSPG…DDLD) and 498-518 (SHSL…PLGR). Residues 301–315 (ATPNQSFSPAQSHQL) are compositionally biased toward polar residues. Positions 320 to 331 (HDFHWSRTDAFG) are enriched in basic and acidic residues. Composition is skewed to polar residues over residues 371 to 386 (IPSS…SNFS) and 419 to 437 (SSRS…PTQK). Low complexity predominate over residues 453–473 (LSSSDSPRFAFSRSPSRLSSQ).

Belongs to the ATG13 family. Plant subfamily. As to quaternary structure, interacts with ATG1A. Interacts with ATG11 and ATG101. Post-translationally, phosphorylated during nutrient starvation. Dephosphorylated in nutrient-rich conditions.

It is found in the cytoplasmic vesicle. The protein resides in the autophagosome. Involved in autophagy in a nutritional condition dependent manner. The ATG1-ATG13 protein kinase complex regulates downstream events required for autophagosome enclosure and/or vacuolar delivery. Becomes a target of autophagy under nutrient starvation. Connects autophagy to plant nutritional status. In Arabidopsis thaliana (Mouse-ear cress), this protein is Autophagy-related protein 13a.